A 231-amino-acid chain; its full sequence is Adenosylcobinamide-GDP ribazoletransferase (231 aa).

Helical transmembrane passes span 29–49, 53–73, 101–121, 126–146, 167–187, and 211–231; these read ICAY…SMKL, NFLW…LFHF, IGPF…YAFL, IDLI…LHFG, LISL…IISL, and DVLG…LSLI.

It belongs to the CobS family. Requires Mg(2+) as cofactor.

The protein resides in the cell inner membrane. It carries out the reaction alpha-ribazole + adenosylcob(III)inamide-GDP = adenosylcob(III)alamin + GMP + H(+). The enzyme catalyses alpha-ribazole 5'-phosphate + adenosylcob(III)inamide-GDP = adenosylcob(III)alamin 5'-phosphate + GMP + H(+). The protein operates within cofactor biosynthesis; adenosylcobalamin biosynthesis; adenosylcobalamin from cob(II)yrinate a,c-diamide: step 7/7. Its function is as follows. Joins adenosylcobinamide-GDP and alpha-ribazole to generate adenosylcobalamin (Ado-cobalamin). Also synthesizes adenosylcobalamin 5'-phosphate from adenosylcobinamide-GDP and alpha-ribazole 5'-phosphate. The polypeptide is Adenosylcobinamide-GDP ribazoletransferase (Kosmotoga olearia (strain ATCC BAA-1733 / DSM 21960 / TBF 19.5.1)).